Consider the following 118-residue polypeptide: Basic phospholipase A2 nigroxin A (118 aa).

Intrachain disulfides connect Cys11-Cys70, Cys25-Cys117, Cys27-Cys43, Cys42-Cys98, Cys49-Cys91, Cys59-Cys84, and Cys77-Cys89. Ca(2+)-binding residues include Tyr26, Gly28, and Gly30. His46 is a catalytic residue. Asp47 provides a ligand contact to Ca(2+). Asp92 is a catalytic residue.

The protein belongs to the phospholipase A2 family. Group I subfamily. D49 sub-subfamily. Requires Ca(2+) as cofactor. Expressed by the venom gland.

Its subcellular location is the secreted. The enzyme catalyses a 1,2-diacyl-sn-glycero-3-phosphocholine + H2O = a 1-acyl-sn-glycero-3-phosphocholine + a fatty acid + H(+). Functionally, snake venom phospholipase A2 (PLA2) that has only a weak enzymatic activity. It has a myotoxic activity in vivo (dystrophic effect). PLA2 catalyzes the calcium-dependent hydrolysis of the 2-acyl groups in 3-sn-phosphoglycerides. The protein is Basic phospholipase A2 nigroxin A of Micrurus nigrocinctus (Central American coral snake).